We begin with the raw amino-acid sequence, 786 residues long: Endonuclease MutS2 (786 aa).

An ATP-binding site is contributed by 332–339 (GPNTGGKT). Positions 711–786 (VDLRGMDSIE…GTGVTIVELK (76 aa)) constitute a Smr domain.

Belongs to the DNA mismatch repair MutS family. MutS2 subfamily. Homodimer. Binds to stalled ribosomes, contacting rRNA.

Its function is as follows. Endonuclease that is involved in the suppression of homologous recombination and thus may have a key role in the control of bacterial genetic diversity. Functionally, acts as a ribosome collision sensor, splitting the ribosome into its 2 subunits. Detects stalled/collided 70S ribosomes which it binds and splits by an ATP-hydrolysis driven conformational change. Acts upstream of the ribosome quality control system (RQC), a ribosome-associated complex that mediates the extraction of incompletely synthesized nascent chains from stalled ribosomes and their subsequent degradation. Probably generates substrates for RQC. The protein is Endonuclease MutS2 of Clostridium kluyveri (strain NBRC 12016).